A 129-amino-acid polypeptide reads, in one-letter code: NADH-quinone oxidoreductase subunit A (129 aa).

The next 3 helical transmembrane spans lie at 14–34 (LAIH…VAAL), 67–87 (FLIA…FAWA), and 95–115 (WFGL…LVYL).

The protein belongs to the complex I subunit 3 family. As to quaternary structure, NDH-1 is composed of 14 different subunits. Subunits NuoA, H, J, K, L, M, N constitute the membrane sector of the complex.

It localises to the cell inner membrane. The enzyme catalyses a quinone + NADH + 5 H(+)(in) = a quinol + NAD(+) + 4 H(+)(out). Its function is as follows. NDH-1 shuttles electrons from NADH, via FMN and iron-sulfur (Fe-S) centers, to quinones in the respiratory chain. The immediate electron acceptor for the enzyme in this species is believed to be ubiquinone. Couples the redox reaction to proton translocation (for every two electrons transferred, four hydrogen ions are translocated across the cytoplasmic membrane), and thus conserves the redox energy in a proton gradient. The chain is NADH-quinone oxidoreductase subunit A from Rhodopseudomonas palustris (strain HaA2).